The sequence spans 810 residues: Zinc finger CCCH domain-containing protein 11A (810 aa).

C3H1-type zinc fingers lie at residues 2–29 (PNQG…HCEA), 31–57 (IGNE…HMEI), and 60–86 (KRSE…HHNR). Position 108 is a phosphoserine (S108). Glycyl lysine isopeptide (Lys-Gly) (interchain with G-Cter in SUMO2) cross-links involve residues K114 and K124. At S132 the chain carries Phosphoserine. Disordered stretches follow at residues 139-194 (MKVE…GLRV), 223-258 (KKMK…ENVR), 285-351 (GKRK…DKVN), and 367-432 (ERAS…TTCI). K140 participates in a covalent cross-link: Glycyl lysine isopeptide (Lys-Gly) (interchain with G-Cter in SUMO2). S149 and S171 each carry phosphoserine. A compositionally biased stretch (acidic residues) spans 160 to 175 (ADDDEDDDDQFSEEGD). S290 is modified (phosphoserine). Composition is skewed to basic and acidic residues over residues 309-322 (KKVE…DKTP) and 367-390 (ERAS…KTDD). T321 carries the phosphothreonine modification. Positions 362-423 (EEILLERASQ…KHRQQEAERQ (62 aa)) form a coiled coil. Position 370 is a phosphoserine (S370). Positions 391–402 (STSGARSSSTIR) are enriched in polar residues. The segment covering 417–432 (QQEAERQKSKKDTTCI) has biased composition (basic and acidic residues). A Glycyl lysine isopeptide (Lys-Gly) (interchain with G-Cter in SUMO2) cross-link involves residue K478. The tract at residues 482-549 (ALRVQQSSES…KEASGETTGV (68 aa)) is disordered. Over residues 486–498 (QQSSESSTSSPSQ) the composition is skewed to low complexity. K619 participates in a covalent cross-link: Glycyl lysine isopeptide (Lys-Gly) (interchain with G-Cter in SUMO2). Residues 715–768 (TVPEAENPRDSLVLPPTQSSSDSSPPEVSGPSSSQMSMKTRRLSSASTGKPPLS) are disordered. The span at 729–748 (PPTQSSSDSSPPEVSGPSSS) shows a compositional bias: low complexity. Positions 749 to 762 (QMSMKTRRLSSAST) are enriched in polar residues.

In terms of assembly, interacts with TREX complex components THOC2, DDX39 and POLDIP3; the interactions are ATP-dependent. Interacts with PABPN1; this interaction retains ZC3H11A in nuclear speckles. Interacts with KPNA3.

The protein resides in the nucleus. It is found in the nucleus speckle. Through its association with TREX complex components, may participate in the export and post-transcriptional coordination of selected mRNA transcripts, including those required to maintain the metabolic processes in embryonic cells. Binds RNA. In terms of biological role, (Microbial infection) Plays a role in efficient growth of several nuclear-replicating viruses such as HIV-1, influenza virus or herpes simplex virus 1/HHV-1. Required for efficient viral mRNA export. May be required for proper polyadenylation of adenovirus type 5/HAdV-5 capsid mRNA. In Homo sapiens (Human), this protein is Zinc finger CCCH domain-containing protein 11A (ZC3H11A).